The sequence spans 134 residues: Protein NrdI (134 aa).

This sequence belongs to the NrdI family.

Probably involved in ribonucleotide reductase function. The protein is Protein NrdI of Rhizobium etli (strain CIAT 652).